We begin with the raw amino-acid sequence, 177 residues long: MLEKLIERVLFATRWLLAPLCIAMSLVLVVLGYAFMKELWHMLSHLDTISETDLVLSALGLVDLLFMAGLVLMVLLASYESFVSKLDKVDASEITWLKHTDFNALKLKVSLSIVAISAIFLLKRYMSLEDVLSSIPKDTPLSHNPIFWQVVINLVFVCSALLAAVTNNIAFSQNKAH.

A run of 4 helical transmembrane segments spans residues 15–35, 54–74, 102–122, and 145–165; these read WLLA…GYAF, LVLS…VLMV, FNAL…IFLL, and PIFW…LAAV.

This sequence belongs to the UPF0114 family.

It is found in the cell membrane. The chain is UPF0114 protein HPP12_0190 from Helicobacter pylori (strain P12).